Reading from the N-terminus, the 297-residue chain is Vesicular-fusion protein SEC17 (297 aa).

It belongs to the SNAP family.

Its subcellular location is the membrane. Its function is as follows. Required for vesicular transport between the endoplasmic reticulum and the Golgi apparatus. In Komagataella phaffii (strain GS115 / ATCC 20864) (Yeast), this protein is Vesicular-fusion protein SEC17 (SEC17).